We begin with the raw amino-acid sequence, 357 residues long: Glutamine synthetase cytosolic isozyme 1-2 (357 aa).

Positions 19 to 99 constitute a GS beta-grasp domain; sequence IIAEYIWVGG…VMCDCYTPQG (81 aa). A GS catalytic domain is found at 106–357; that stretch reads KRHSAAKIFS…AETTLLWKQN (252 aa).

This sequence belongs to the glutamine synthetase family. In terms of assembly, homooctamer. Expressed in roots and at lower levels in leaf blades and spikelets (rice flower).

The protein resides in the cytoplasm. The catalysed reaction is L-glutamate + NH4(+) + ATP = L-glutamine + ADP + phosphate + H(+). In terms of biological role, high-affinity glutamine synthetase involved in ammonium assimilation. Plays an important role in the primary assimilation of ammonium taken up by roots. Plays a role in maintaining nitrogen metabolic balance during ammonium assimilation, thus controlling plant growth and development. Reassimilates ammonium generated during lignification within developing tillers, which is probably required for the outgrowth of axillary buds. Required for nitrogen-dependent biosynthesis of cytokinin. Active cytokinin in axillary bud meristem is required for axillary bud outgrowth and necessary for tillering. This chain is Glutamine synthetase cytosolic isozyme 1-2, found in Oryza sativa subsp. japonica (Rice).